We begin with the raw amino-acid sequence, 250 residues long: Solute carrier family 66 member 2 (250 aa).

Residues 14 to 80 (RMLVSWGASC…HHFESPLLWQ (67 aa)) enclose the PQ-loop 1 domain. 6 consecutive transmembrane segments (helical) span residues 15-35 (MLVSWGASCAMIFGGVVPYIP), 49-69 (FSIYVCLMLLIANILRILFWF), 72-92 (HFESPLLWQSIIMIVTMLLML), 118-138 (FFWHWTRFIDFIQCVLAFTGV), 151-173 (LFVEILGFLAVFTEALLGVPQLY), and 212-232 (FSICGLLQVFVDIAILLQVYL). The 67-residue stretch at 149–215 (SPLFVEILGF…NQAPFQFSIC (67 aa)) folds into the PQ-loop 2 domain.

It is found in the membrane. This is Solute carrier family 66 member 2 (slc66a2) from Xenopus laevis (African clawed frog).